A 269-amino-acid polypeptide reads, in one-letter code: Glutamate 5-kinase 2 (269 aa).

K16 is a binding site for ATP. Substrate-binding residues include S57, D144, and N156. 218–224 (SGGMISK) is a binding site for ATP.

This sequence belongs to the glutamate 5-kinase family.

The protein resides in the cytoplasm. It carries out the reaction L-glutamate + ATP = L-glutamyl 5-phosphate + ADP. It participates in amino-acid biosynthesis; L-proline biosynthesis; L-glutamate 5-semialdehyde from L-glutamate: step 1/2. Its function is as follows. Catalyzes the transfer of a phosphate group to glutamate to form L-glutamate 5-phosphate. The polypeptide is Glutamate 5-kinase 2 (Rhizobium meliloti (strain 1021) (Ensifer meliloti)).